The following is a 280-amino-acid chain: Dehydrogenase/reductase SDR family member 2, mitochondrial (280 aa).

A mitochondrion-targeting transit peptide spans 1–23; it reads MLSAVARGYQGWFHPCARLSVRM. Residues S46 and I48 each contribute to the NAD(+) site. The residue at position 96 (K96) is an N6-acetyllysine; alternate. Residue K96 is modified to N6-succinyllysine; alternate. Residue S172 participates in substrate binding. 2 residues coordinate NAD(+): Y185 and K189. Y185 serves as the catalytic Proton acceptor. Position 219 is an N6-acetyllysine; alternate (K219). The residue at position 219 (K219) is an N6-succinyllysine; alternate. Position 220 (T220) interacts with NAD(+). S223 carries the post-translational modification Phosphoserine. Position 237 is an N6-succinyllysine (K237).

This sequence belongs to the short-chain dehydrogenases/reductases (SDR) family. As to quaternary structure, directly interacts with MDM2; this interaction occurs in the nucleus and does not target DHRS2 to degradation. As to expression, widely expressed, with highest levels in liver and kidney, followed by heart, spleen, skeletal muscle and placenta. In hemopoietic cells, expressed in dendritic cells, but not in monocytes, macrophages, granulocytes, nor in B and T lymphocytes.

It localises to the mitochondrion matrix. Its subcellular location is the nucleus. Its function is as follows. NADPH-dependent oxidoreductase which catalyzes the reduction of dicarbonyl compounds. Displays reductase activity in vitro with 3,4-hexanedione, 2,3-heptanedione and 1-phenyl-1,2-propanedione as substrates. May function as a dicarbonyl reductase in the enzymatic inactivation of reactive carbonyls involved in covalent modification of cellular components. Also displays a minor hydroxysteroid dehydrogenase activity toward bile acids such as ursodeoxycholic acid (UDCA) and isoursodeoxycholic acid (isoUDCA), which makes it unlikely to control hormone levels. Doesn't show any activity in vitro with retinoids and sugars as substrates. Attenuates MDM2-mediated p53/TP53 degradation, leading to p53/TP53 stabilization and increased transcription activity, resulting in the accumulation of MDM2 and CDKN1A/p21. Reduces proliferation, migration and invasion of cancer cells and well as the production of ROS in cancer. The protein is Dehydrogenase/reductase SDR family member 2, mitochondrial of Homo sapiens (Human).